Reading from the N-terminus, the 314-residue chain is Olfactory receptor 1E2 (314 aa).

Over 1–25 the chain is Extracellular; the sequence is MMGQNQTSISDFLLLGLPIQPEQQN. N5 carries N-linked (GlcNAc...) asparagine glycosylation. Residues 26–49 form a helical membrane-spanning segment; sequence LCYALFLAMYLTTLLGNLLIIVLI. Over 50–57 the chain is Cytoplasmic; the sequence is RLDSHLHT. The helical transmembrane segment at 58–79 threads the bilayer; that stretch reads PMYLFLSNLSFSDLCFSSVTIP. The Extracellular segment spans residues 80-100; that stretch reads KLLQNMQNQDPSIPYADCLTQ. Residues C97 and C189 are joined by a disulfide bond. Residues 101-120 traverse the membrane as a helical segment; it reads MYFFLLFGDLESFLLVAMAY. The Cytoplasmic portion of the chain corresponds to 121–139; the sequence is DRYVAICFPLHYTAIMSPM. The chain crosses the membrane as a helical span at residues 140-158; it reads LCLSLVALSWVLTTFHAML. Over 159–195 the chain is Extracellular; sequence HTLLMARLCFCADNVIPHFFCDMSALLKLACSDTRVN. Residues 196 to 219 traverse the membrane as a helical segment; it reads EWVIFIMGGLIVVIPFLLILGSYA. Over 220-236 the chain is Cytoplasmic; that stretch reads RIVSSILKVPSSKGICK. A helical transmembrane segment spans residues 237–259; it reads AFSTCGSHLSVVSLFYGTIIGLY. Residues 260 to 272 lie on the Extracellular side of the membrane; that stretch reads LCPSANSSTLKET. An N-linked (GlcNAc...) asparagine glycan is attached at N265. A helical transmembrane segment spans residues 273 to 292; the sequence is VMAMMYTVVTPMLNPFIYSL. The Cytoplasmic segment spans residues 293-314; that stretch reads RNRDMKGALERVICKRKNPFLL.

This sequence belongs to the G-protein coupled receptor 1 family.

Its subcellular location is the cell membrane. In terms of biological role, odorant receptor. The sequence is that of Olfactory receptor 1E2 (OR1E2) from Gorilla gorilla gorilla (Western lowland gorilla).